The chain runs to 788 residues: Protein TRS1 (788 aa).

Disordered regions lie at residues 1–82 (MAQR…NFWH) and 610–663 (IHKK…PSRV). A compositionally biased stretch (gly residues) spans 16–25 (RGRGAGGPSG). Residues 26 to 56 (VGSSPPSSCVPMGATSTAGTGASAAPTATPG) are compositionally biased toward low complexity. Positions 74 to 248 (SGNNSNFWHG…HGAGEVVRLY (175 aa)) are RNA-binding. Residues 651–660 (LRRDDEDWKP) are compositionally biased toward basic and acidic residues. The interval 672–788 (LDETFWVLGS…NVATHYHYNA (117 aa)) is interaction with host EIF2AK2/PKR.

It belongs to the herpesviridae US22 family. Interacts with host EIF2AK2/PKR; this interaction retains EIF2AK2 to the host nucleus and prevents its activation. Interaction (via N-terminus) with host BECN1; this interaction inhibits host autophagy. Interacts with the viral DNA polymerase accessory subunit UL44. Interacts with host HSPA5.

The protein resides in the virion. It is found in the host cytoplasm. Its subcellular location is the host nucleus. Its function is as follows. Inhibits the establishment of the antiviral state in the infected cell. Prevents the phosphorylation of the host eukaryotic translation initiation factor eIF-2alpha/EIF2S1 and thus the shutoff of viral and cellular protein synthesis by directly interacting with EIF2AK2/PKR. Prevents stress granule formation in response to eIF-2alpha/EIF2S1 phosphorylation, thereby rescuing viral replication and protein synthesis. Also inhibits host autophagy by interacting with host Beclin-1/BECN1. In Human cytomegalovirus (strain Merlin) (HHV-5), this protein is Protein TRS1 (TRS1).